The following is a 118-amino-acid chain: Evasin P1080 (118 aa).

Positions 1-19 (FFQLAVFVVILFNINLLSA) are cleaved as a signal peptide. Intrachain disulfides connect Cys-41-Cys-60, Cys-45-Cys-62, and Cys-56-Cys-73. The N-linked (GlcNAc...) asparagine glycan is linked to Asn-44. N-linked (GlcNAc...) asparagine glycosylation is found at Asn-67 and Asn-104.

Its subcellular location is the secreted. Functionally, salivary chemokine-binding protein which binds to host chemokines CXCL1, CXCL2, CXCL3, CXCL4, CXCL5, CXCL6, CXCL10, CXCL11 and CXCL13. The polypeptide is Evasin P1080 (Ixodes ricinus (Common tick)).